The primary structure comprises 535 residues: cAMP-regulated D2 protein (535 aa).

The N-terminal stretch at 1 to 20 is a signal peptide; that stretch reads MNKLLVFILLLLLLINISFA. A disulfide bridge links cysteine 89 with cysteine 109. Serine 213 functions as the Acyl-ester intermediate in the catalytic mechanism. Cysteine 265 and cysteine 272 are joined by a disulfide. Residues glutamate 338 and histidine 440 each act as charge relay system in the active site. Asparagine 500 is a glycosylation site (N-linked (GlcNAc...) asparagine).

It belongs to the type-B carboxylesterase/lipase family.

The protein localises to the cytoplasmic vesicle. It is found in the esterosome membrane. The polypeptide is cAMP-regulated D2 protein (D2) (Dictyostelium discoideum (Social amoeba)).